Consider the following 163-residue polypeptide: Nucleotide-binding protein Acel_0286 (163 aa).

The protein belongs to the YajQ family.

Functionally, nucleotide-binding protein. In Acidothermus cellulolyticus (strain ATCC 43068 / DSM 8971 / 11B), this protein is Nucleotide-binding protein Acel_0286.